Reading from the N-terminus, the 486-residue chain is Glutamate--tRNA ligase 1 (486 aa).

The short motif at 9–19 (PSPTGMLHIGG) is the 'HIGH' region element. Positions 259 to 263 (KLSKR) match the 'KMSKS' region motif. Lys262 contacts ATP.

Belongs to the class-I aminoacyl-tRNA synthetase family. Glutamate--tRNA ligase type 1 subfamily. In terms of assembly, monomer.

It localises to the cytoplasm. The catalysed reaction is tRNA(Glu) + L-glutamate + ATP = L-glutamyl-tRNA(Glu) + AMP + diphosphate. Catalyzes the attachment of glutamate to tRNA(Glu) in a two-step reaction: glutamate is first activated by ATP to form Glu-AMP and then transferred to the acceptor end of tRNA(Glu). The sequence is that of Glutamate--tRNA ligase 1 from Hyphomonas neptunium (strain ATCC 15444).